The sequence spans 938 residues: MLRKVRSWTEIWRWATLLFLFYHLGYVCGQIRYPVPEESQEGTFVGNVAQDFLLDTDSLSARRLQVAGEVNQRHFRVDLDSGALLIKNPIDREALCGLSASCIVPLEFVTEGPLEMYRAEVEIVDVNDHAPRFPRQQLDLEIGEAAPPGQRFPLEKAQDADVGSNSISSYRLSSNEHFALDVKKRSDGSLVPELLLEKPLDREKQSDYRLVLTAVDGGNPPRSGTAELRVSVLDVNDNAPAFQQSSYRISVLESAPAGMVLIQLNASDPDLGPSGNVTFYFSGHTPDRVRNLFSLHPTTGKLTLLGPLDFESENYYEFDVRARDGGSPAMEQHCSLRVDLLDVNDNAPYITVTSELGTLPESAEPGTVVALISVQDPDSGSNGDVSLRIPDHLPFALKSAFRNQFSLVTAGPLDREAKSSYDIMVTASDAGNPPLSTHRTIFLNISDVNDNPPSFFQRSHEVFVPENNRPGDLLCSLAASDPDSGLNALISYSLLEPRNRDVSASSFISLNPQTGAVHATRSFDYEQTQTLQFEVQARDRGNPPLSSTVTVRLFVLDLNDNAPAVLRPRARPGSLCPQALPPSVGAGHLITKVTAVDLDSGYNAWVSYQLLEAPDPSLFAVSRYAGEVRTAVPIPADLPPQKLVIVVKDSGSPPLSTSVTLLVSLEEDTHPVVPDLRESSAPREGESRLTLYLAVSLVAICFVSFGSFVALLSKCLRGAACGVTCFPAGTCACLTRSRRREGLPPSNGILRIQLGSDDPIKFVDVGGHSHGCTPLASAPTRSDSFMMVKSPSAPMAGEPVRPSCPPSDLLYGLEQAPPNTDWRFSQAQRPGTSGSQNGDDTGTWPNNQFDTEMLQAMILASASEAADGSSTLGGGAGTMGLSARYGPQFTLQHVPDYRQNVYIPGSNATLTNAAGKRDGKAPAGGNGNKKKSGKKEKK.

The signal sequence occupies residues 1–29 (MLRKVRSWTEIWRWATLLFLFYHLGYVCG). Cadherin domains lie at 30–133 (QIRY…APRF), 134–242 (PRQQ…APAF), 243–350 (QQSS…APYI), 351–455 (TVTS…PPSF), 456–565 (FQRS…APAV), and 572–676 (PGSL…VPDL). Over 30-692 (QIRYPVPEES…REGESRLTLY (663 aa)) the chain is Extracellular. 3 N-linked (GlcNAc...) asparagine glycosylation sites follow: N265, N276, and N444. Residues 693-713 (LAVSLVAICFVSFGSFVALLS) form a helical membrane-spanning segment. Topologically, residues 714 to 938 (KCLRGAACGV…KKKSGKKEKK (225 aa)) are cytoplasmic. Disordered regions lie at residues 791-847 (PSAP…WPNN) and 908-938 (ATLT…KEKK). The segment covering 822 to 847 (WRFSQAQRPGTSGSQNGDDTGTWPNN) has biased composition (polar residues). Over residues 928–938 (NKKKSGKKEKK) the composition is skewed to basic residues.

Its subcellular location is the cell membrane. In terms of biological role, potential calcium-dependent cell-adhesion protein. May be involved in the establishment and maintenance of specific neuronal connections in the brain. The polypeptide is Protocadherin gamma-C4 (PCDHGC4) (Homo sapiens (Human)).